The chain runs to 129 residues: Small ribosomal subunit protein uS8 (129 aa).

It belongs to the universal ribosomal protein uS8 family. Part of the 30S ribosomal subunit.

Functionally, one of the primary rRNA binding proteins, it binds directly to 16S rRNA central domain where it helps coordinate assembly of the platform of the 30S subunit. The polypeptide is Small ribosomal subunit protein uS8 (Thermofilum pendens (strain DSM 2475 / Hrk 5)).